A 179-amino-acid chain; its full sequence is MNRLKEKFQKEITPALVSKFNYKSVMQVPKIEKIVINTGVGDAVSNSKTLDNAVEELTQITGQKPVVTRAKKSIAGFRLREGMPIGAKVTLRGEQMYEFFDKLVSVSLPRVRDFRGVSKKSFDGRGNYTLGVKEQLIFPEIDYDKVSKVRGMDIVIVTTAKTDEEARELLTQFGMPFQK.

Belongs to the universal ribosomal protein uL5 family. In terms of assembly, part of the 50S ribosomal subunit; part of the 5S rRNA/L5/L18/L25 subcomplex. Contacts the 5S rRNA and the P site tRNA. Forms a bridge to the 30S subunit in the 70S ribosome.

This is one of the proteins that bind and probably mediate the attachment of the 5S RNA into the large ribosomal subunit, where it forms part of the central protuberance. In the 70S ribosome it contacts protein S13 of the 30S subunit (bridge B1b), connecting the 2 subunits; this bridge is implicated in subunit movement. Contacts the P site tRNA; the 5S rRNA and some of its associated proteins might help stabilize positioning of ribosome-bound tRNAs. The chain is Large ribosomal subunit protein uL5 from Bacillus anthracis (strain A0248).